Reading from the N-terminus, the 410-residue chain is Chitinase-3-like protein 1 (410 aa).

The first 48 residues, 1-48 (MGVKAAQTGIWASQGQSIRVVGFQAQTAHRAICLLGFVVLVLLQCCSA), serve as a signal peptide directing secretion. The GH18 domain occupies 49–410 (YKLVCYYTSW…NAIKDALAAT (362 aa)). Residues Cys53 and Cys78 are joined by a disulfide bond. Residue Asn87 is glycosylated (N-linked (GlcNAc...) asparagine). Chitin-binding positions include 97 to 98 (EW), 124 to 127 (GGWN), Tyr168, 231 to 234 (MTYD), and Arg290. A disulfide bridge connects residues Cys327 and Cys391. Positions 351 to 365 (QWVGYDDQESVKSKV) are important for AKT1 activation and IL8 production. A chitin-binding site is contributed by Trp379.

It belongs to the glycosyl hydrolase 18 family. Monomer.

It is found in the secreted. The protein resides in the extracellular space. Its subcellular location is the cytoplasm. The protein localises to the perinuclear region. It localises to the endoplasmic reticulum. Its function is as follows. Carbohydrate-binding lectin with a preference for chitin. Has no chitinase activity. May play a role in tissue remodeling and in the capacity of cells to respond to and cope with changes in their environment. Plays a role in T-helper cell type 2 (Th2) inflammatory response and IL-13-induced inflammation, regulating allergen sensitization, inflammatory cell apoptosis, dendritic cell accumulation and M2 macrophage differentiation. Facilitates invasion of pathogenic enteric bacteria into colonic mucosa and lymphoid organs. Mediates activation of AKT1 signaling pathway and subsequent IL8 production in colonic epithelial cells. Regulates antibacterial responses in lung by contributing to macrophage bacterial killing, controlling bacterial dissemination and augmenting host tolerance. Also regulates hyperoxia-induced injury, inflammation and epithelial apoptosis in lung. This is Chitinase-3-like protein 1 (CHI3L1) from Pongo abelii (Sumatran orangutan).